The sequence spans 75 residues: Tautomerase PptA (75 aa).

The Proton acceptor; via imino nitrogen role is filled by Pro-2.

This sequence belongs to the 4-oxalocrotonate tautomerase family. PptA subfamily. As to quaternary structure, homodimer.

It localises to the cytoplasm. The protein is Tautomerase PptA of Klebsiella pneumoniae (strain 342).